Reading from the N-terminus, the 425-residue chain is Serine--tRNA ligase (425 aa).

230-232 contacts L-serine; sequence TAE. Position 261–263 (261–263) interacts with ATP; the sequence is RSE. Residue glutamate 284 participates in L-serine binding. 348 to 351 is a binding site for ATP; that stretch reads EISS. Serine 384 is an L-serine binding site.

This sequence belongs to the class-II aminoacyl-tRNA synthetase family. Type-1 seryl-tRNA synthetase subfamily. In terms of assembly, homodimer. The tRNA molecule binds across the dimer.

It localises to the cytoplasm. It carries out the reaction tRNA(Ser) + L-serine + ATP = L-seryl-tRNA(Ser) + AMP + diphosphate + H(+). The catalysed reaction is tRNA(Sec) + L-serine + ATP = L-seryl-tRNA(Sec) + AMP + diphosphate + H(+). It functions in the pathway aminoacyl-tRNA biosynthesis; selenocysteinyl-tRNA(Sec) biosynthesis; L-seryl-tRNA(Sec) from L-serine and tRNA(Sec): step 1/1. Its function is as follows. Catalyzes the attachment of serine to tRNA(Ser). Is also able to aminoacylate tRNA(Sec) with serine, to form the misacylated tRNA L-seryl-tRNA(Sec), which will be further converted into selenocysteinyl-tRNA(Sec). This Nitratidesulfovibrio vulgaris (strain DSM 19637 / Miyazaki F) (Desulfovibrio vulgaris) protein is Serine--tRNA ligase.